The sequence spans 354 residues: Glycerol-1-phosphate dehydrogenase [NAD(P)+] (354 aa).

NAD(+) is bound by residues Gly-103–Asp-107 and Thr-125–Ser-128. Asp-130 provides a ligand contact to substrate. Position 134 (Ser-134) interacts with NAD(+). Asp-176 serves as a coordination point for substrate. Asp-176 and His-255 together coordinate Zn(2+). His-259 lines the substrate pocket. Residue His-271 participates in Zn(2+) binding.

This sequence belongs to the glycerol-1-phosphate dehydrogenase family. Homodimer. It depends on Zn(2+) as a cofactor.

It localises to the cytoplasm. It carries out the reaction sn-glycerol 1-phosphate + NAD(+) = dihydroxyacetone phosphate + NADH + H(+). The enzyme catalyses sn-glycerol 1-phosphate + NADP(+) = dihydroxyacetone phosphate + NADPH + H(+). Its pathway is membrane lipid metabolism; glycerophospholipid metabolism. In terms of biological role, catalyzes the NAD(P)H-dependent reduction of dihydroxyacetonephosphate (DHAP or glycerone phosphate) to glycerol 1-phosphate (G1P). The G1P thus generated is used as the glycerophosphate backbone of phospholipids in the cellular membranes of Archaea. The protein is Glycerol-1-phosphate dehydrogenase [NAD(P)+] of Cenarchaeum symbiosum (strain A).